The primary structure comprises 223 residues: uncharacterized protein (223 aa).

The next 2 membrane-spanning stretches (helical) occupy residues 1–21 and 45–65; these read MLII…TFYL and ILIG…TSLI.

The protein resides in the cell membrane. This is an uncharacterized protein from Haemophilus influenzae (strain ATCC 51907 / DSM 11121 / KW20 / Rd).